Reading from the N-terminus, the 352-residue chain is Ferrochelatase (352 aa).

2 residues coordinate Fe cation: histidine 222 and glutamate 303.

This sequence belongs to the ferrochelatase family.

The protein localises to the cytoplasm. The catalysed reaction is heme b + 2 H(+) = protoporphyrin IX + Fe(2+). Its pathway is porphyrin-containing compound metabolism; protoheme biosynthesis; protoheme from protoporphyrin-IX: step 1/1. Catalyzes the ferrous insertion into protoporphyrin IX. In Brucella abortus (strain S19), this protein is Ferrochelatase.